Here is a 65-residue protein sequence, read N- to C-terminus: UPF0434 protein RPD_0454 (65 aa).

This sequence belongs to the UPF0434 family.

This Rhodopseudomonas palustris (strain BisB5) protein is UPF0434 protein RPD_0454.